A 329-amino-acid polypeptide reads, in one-letter code: Phosphate acyltransferase (329 aa).

It belongs to the PlsX family. Homodimer. Probably interacts with PlsY.

Its subcellular location is the cytoplasm. It carries out the reaction a fatty acyl-[ACP] + phosphate = an acyl phosphate + holo-[ACP]. It functions in the pathway lipid metabolism; phospholipid metabolism. In terms of biological role, catalyzes the reversible formation of acyl-phosphate (acyl-PO(4)) from acyl-[acyl-carrier-protein] (acyl-ACP). This enzyme utilizes acyl-ACP as fatty acyl donor, but not acyl-CoA. The chain is Phosphate acyltransferase from Sulfurovum sp. (strain NBC37-1).